The sequence spans 1361 residues: Xanthine dehydrogenase 1 (1361 aa).

In terms of domain architecture, 2Fe-2S ferredoxin-type spans 15 to 101 (TEALLYVNGV…GMHVISIEGL (87 aa)). The [2Fe-2S] cluster site is built by cysteine 53, cysteine 58, cysteine 61, cysteine 83, cysteine 123, cysteine 126, cysteine 159, and cysteine 161. An FAD-binding PCMH-type domain is found at 257 to 442 (RGNGGITWYR…LSVFLPWTRP (186 aa)). FAD contacts are provided by residues 285–292 (LLVGNTEV), phenylalanine 365, 375–379 (CIGGN), aspartate 388, leucine 432, and lysine 450. 2 residues coordinate Mo-molybdopterin: glutamine 796 and phenylalanine 827. Substrate is bound by residues glutamate 831 and arginine 909. Position 941 (arginine 941) interacts with Mo-molybdopterin. 2 residues coordinate substrate: phenylalanine 943 and threonine 1039. Alanine 1108 is a Mo-molybdopterin binding site. The active-site Proton acceptor is the glutamate 1297.

Belongs to the xanthine dehydrogenase family. As to quaternary structure, homodimer. Requires [2Fe-2S] cluster as cofactor. FAD is required as a cofactor. It depends on Mo-molybdopterin as a cofactor. As to expression, expressed in roots, leaves, stems, flowers and siliques.

The enzyme catalyses xanthine + NAD(+) + H2O = urate + NADH + H(+). It carries out the reaction hypoxanthine + NAD(+) + H2O = xanthine + NADH + H(+). In terms of biological role, key enzyme involved in purine catabolism. Catalyzes the oxidation of hypoxanthine to xanthine and the oxidation of xanthine to urate. Regulates the level of ureides and plays an important role during plant growth and development, senescence and response to stresses. Possesses NADH oxidase activity and may contribute to the generation of superoxide anions in planta. This chain is Xanthine dehydrogenase 1 (XDH1), found in Arabidopsis thaliana (Mouse-ear cress).